The following is a 343-amino-acid chain: Leucine-rich repeat-containing protein 23 (343 aa).

Positions 1–30 (MSDEDDLEDSEPDQDDSEKEEDEKETEEGE) are enriched in acidic residues. Positions 1 to 47 (MSDEDDLEDSEPDQDDSEKEEDEKETEEGEDYRKEGEEFPEEWLPTP) are disordered. 8 LRR repeats span residues 92–113 (HLRY…NYLT), 114–134 (HLLW…NELP), 135–155 (YLQI…ISHP), 156–177 (RLET…DPEK), 180–200 (SLHT…INLP), 201–222 (KLKN…EDLS), 223–244 (NLTT…SREM), and 246–267 (SLQY…AKLR). The tract at residues 208–343 (AQNMLKKVEG…RDLEPEQSLI (136 aa)) is interaction with RSPH9. The LRRCT domain occupies 280 to 318 (NPCTDETSYRQEALVQMPYLERLDKEFYEEEERAEADVI). Positions 307 to 329 (YEEEERAEADVIRQRLKEEKEQE) form a coiled coil. Residues 318–337 (IRQRLKEEKEQEPEPQRDLE) show a composition bias toward basic and acidic residues. Residues 318 to 343 (IRQRLKEEKEQEPEPQRDLEPEQSLI) form a disordered region.

In terms of assembly, component of the axonemal radial spoke complex. Interacts with RSPH3. Interacts with RSPH9. As to expression, expressed in spermatozoa.

It is found in the cell projection. Its subcellular location is the cilium. The protein localises to the flagellum. It localises to the cytoplasm. The protein resides in the cytoskeleton. It is found in the flagellum axoneme. Essential for sperm motility and male fertility. Plays an important role in the proper assembly of the third radial spoke (RS3) head and the bridge structure between RS2 and RS3 in the sperm flagella. This is Leucine-rich repeat-containing protein 23 (LRRC23) from Homo sapiens (Human).